The sequence spans 159 residues: Large ribosomal subunit protein uL10 (159 aa).

It belongs to the universal ribosomal protein uL10 family. Part of the ribosomal stalk of the 50S ribosomal subunit. The N-terminus interacts with L11 and the large rRNA to form the base of the stalk. The C-terminus forms an elongated spine to which L12 dimers bind in a sequential fashion forming a multimeric L10(L12)X complex.

In terms of biological role, forms part of the ribosomal stalk, playing a central role in the interaction of the ribosome with GTP-bound translation factors. In Campylobacter jejuni subsp. jejuni serotype O:6 (strain 81116 / NCTC 11828), this protein is Large ribosomal subunit protein uL10.